Consider the following 553-residue polypeptide: Glycine betaine/proline/choline transporter VP1723 (553 aa).

The next 12 helical transmembrane spans lie at 43–63, 85–105, 122–142, 191–211, 231–251, 278–298, 310–330, 362–382, 393–413, 443–463, 490–510, and 515–535; these read NRVF…TLTF, FFLA…VTPL, AGWL…FFGV, WALH…IFSF, VWGW…VFGL, TQVV…VAGL, MILA…MAIL, WTAF…MFIA, FIIC…TAFG, VMPF…VFFI, VFWC…GGLA, and MAVT…VSLI.

This sequence belongs to the BCCT transporter (TC 2.A.15) family.

The protein localises to the cell inner membrane. In terms of biological role, involved in the uptake of osmoprotectants. Can transport glycine betaine, proline and choline. The polypeptide is Glycine betaine/proline/choline transporter VP1723 (Vibrio parahaemolyticus serotype O3:K6 (strain RIMD 2210633)).